Reading from the N-terminus, the 193-residue chain is Peptidyl-tRNA hydrolase (193 aa).

Tyr14 contacts tRNA. His19 (proton acceptor) is an active-site residue. TRNA is bound by residues Phe64, Asn66, and Asn112.

Belongs to the PTH family. In terms of assembly, monomer.

It is found in the cytoplasm. The catalysed reaction is an N-acyl-L-alpha-aminoacyl-tRNA + H2O = an N-acyl-L-amino acid + a tRNA + H(+). Its function is as follows. Hydrolyzes ribosome-free peptidyl-tRNAs (with 1 or more amino acids incorporated), which drop off the ribosome during protein synthesis, or as a result of ribosome stalling. In terms of biological role, catalyzes the release of premature peptidyl moieties from peptidyl-tRNA molecules trapped in stalled 50S ribosomal subunits, and thus maintains levels of free tRNAs and 50S ribosomes. The polypeptide is Peptidyl-tRNA hydrolase (Bartonella bacilliformis (strain ATCC 35685 / KC583 / Herrer 020/F12,63)).